A 435-amino-acid polypeptide reads, in one-letter code: Enolase (435 aa).

Q163 is a binding site for (2R)-2-phosphoglycerate. The active-site Proton donor is E205. Mg(2+) contacts are provided by D243, E292, and D319. K344, R373, S374, and K395 together coordinate (2R)-2-phosphoglycerate. K344 serves as the catalytic Proton acceptor.

This sequence belongs to the enolase family. It depends on Mg(2+) as a cofactor.

The protein resides in the cytoplasm. The protein localises to the secreted. It is found in the cell surface. The catalysed reaction is (2R)-2-phosphoglycerate = phosphoenolpyruvate + H2O. It functions in the pathway carbohydrate degradation; glycolysis; pyruvate from D-glyceraldehyde 3-phosphate: step 4/5. Catalyzes the reversible conversion of 2-phosphoglycerate (2-PG) into phosphoenolpyruvate (PEP). It is essential for the degradation of carbohydrates via glycolysis. The protein is Enolase of Streptococcus agalactiae serotype Ia (strain ATCC 27591 / A909 / CDC SS700).